Consider the following 338-residue polypeptide: Lipoate-protein ligase A (338 aa).

A BPL/LPL catalytic domain is found at 29–216 (PATQRVLFLW…AFFAHYGERV (188 aa)). ATP is bound by residues Arg-71, 76 to 79 (GAVF), and Lys-134. Residue Lys-134 participates in (R)-lipoate binding.

The protein belongs to the LplA family. In terms of assembly, monomer.

It is found in the cytoplasm. The enzyme catalyses L-lysyl-[lipoyl-carrier protein] + (R)-lipoate + ATP = N(6)-[(R)-lipoyl]-L-lysyl-[lipoyl-carrier protein] + AMP + diphosphate + H(+). The protein operates within protein modification; protein lipoylation via exogenous pathway; protein N(6)-(lipoyl)lysine from lipoate: step 1/2. It functions in the pathway protein modification; protein lipoylation via exogenous pathway; protein N(6)-(lipoyl)lysine from lipoate: step 2/2. Functionally, catalyzes both the ATP-dependent activation of exogenously supplied lipoate to lipoyl-AMP and the transfer of the activated lipoyl onto the lipoyl domains of lipoate-dependent enzymes. The sequence is that of Lipoate-protein ligase A from Salmonella arizonae (strain ATCC BAA-731 / CDC346-86 / RSK2980).